Reading from the N-terminus, the 233-residue chain is ATP-dependent dethiobiotin synthetase BioD (233 aa).

Residue glycine 12 to isoleucine 17 participates in ATP binding. A Mg(2+)-binding site is contributed by threonine 16. Lysine 37 is a catalytic residue. Serine 41 lines the substrate pocket. Residues aspartate 51, glutamate 112–glycine 115, and proline 202–leucine 204 contribute to the ATP site. Residues aspartate 51 and glutamate 112 each contribute to the Mg(2+) site.

Belongs to the dethiobiotin synthetase family. As to quaternary structure, homodimer. The cofactor is Mg(2+).

Its subcellular location is the cytoplasm. It carries out the reaction (7R,8S)-7,8-diammoniononanoate + CO2 + ATP = (4R,5S)-dethiobiotin + ADP + phosphate + 3 H(+). It participates in cofactor biosynthesis; biotin biosynthesis; biotin from 7,8-diaminononanoate: step 1/2. In terms of biological role, catalyzes a mechanistically unusual reaction, the ATP-dependent insertion of CO2 between the N7 and N8 nitrogen atoms of 7,8-diaminopelargonic acid (DAPA, also called 7,8-diammoniononanoate) to form a ureido ring. The chain is ATP-dependent dethiobiotin synthetase BioD from Bacillus velezensis (strain DSM 23117 / BGSC 10A6 / LMG 26770 / FZB42) (Bacillus amyloliquefaciens subsp. plantarum).